Consider the following 179-residue polypeptide: Large ribosomal subunit protein uL5 (179 aa).

It belongs to the universal ribosomal protein uL5 family. In terms of assembly, part of the 50S ribosomal subunit; part of the 5S rRNA/L5/L18/L25 subcomplex. Contacts the 5S rRNA and the P site tRNA. Forms a bridge to the 30S subunit in the 70S ribosome.

In terms of biological role, this is one of the proteins that bind and probably mediate the attachment of the 5S RNA into the large ribosomal subunit, where it forms part of the central protuberance. In the 70S ribosome it contacts protein S13 of the 30S subunit (bridge B1b), connecting the 2 subunits; this bridge is implicated in subunit movement. Contacts the P site tRNA; the 5S rRNA and some of its associated proteins might help stabilize positioning of ribosome-bound tRNAs. The chain is Large ribosomal subunit protein uL5 from Alkaliphilus oremlandii (strain OhILAs) (Clostridium oremlandii (strain OhILAs)).